Consider the following 378-residue polypeptide: uncharacterized protein (378 aa).

Low complexity predominate over residues 150-176 (TTTATTSNNRFNNNNSNNNNINNNNDN). Positions 150–187 (TTTATTSNNRFNNNNSNNNNINNNNDNNNKEQKKESRC) are disordered. A compositionally biased stretch (basic and acidic residues) spans 177–187 (NNKEQKKESRC).

This is an uncharacterized protein from Dictyostelium discoideum (Social amoeba).